The sequence spans 476 residues: UDP-glycosyltransferase 71C3 (476 aa).

Residues S290, 349 to 351 (APQ), 366 to 374 (HCGWNSVLE), and 388 to 391 (YAEQ) each bind UDP-alpha-D-glucose.

Belongs to the UDP-glycosyltransferase family.

Its function is as follows. Possesses low quercetin 3-O-glucosyltransferase activity in vitro. The polypeptide is UDP-glycosyltransferase 71C3 (UGT71C3) (Arabidopsis thaliana (Mouse-ear cress)).